A 410-amino-acid polypeptide reads, in one-letter code: Dihydrolipoyllysine-residue acetyltransferase component of pyruvate dehydrogenase complex (410 aa).

In terms of domain architecture, Lipoyl-binding spans 1–69; sequence MPDIGTDLVE…TTGSLIAILN (69 aa). Lys-35 carries the N6-lipoyllysine modification. Positions 81-100 are disordered; the sequence is SSSYSFKNSKNTSTNSNLGN. Residues 113 to 150 enclose the Peripheral subunit-binding (PSBD) domain; it reads HATPTVRRLARKFDIKLENITGTGRKGRILKEDVISYK. The active site involves His-383.

The protein belongs to the 2-oxoacid dehydrogenase family. In terms of assembly, forms a 24-polypeptide structural core with octahedral symmetry. It depends on (R)-lipoate as a cofactor.

The enzyme catalyses N(6)-[(R)-dihydrolipoyl]-L-lysyl-[protein] + acetyl-CoA = N(6)-[(R)-S(8)-acetyldihydrolipoyl]-L-lysyl-[protein] + CoA. Functionally, the pyruvate dehydrogenase complex catalyzes the overall conversion of pyruvate to acetyl-CoA and CO(2). It contains multiple copies of three enzymatic components: pyruvate dehydrogenase (E1), dihydrolipoamide acetyltransferase (E2) and lipoamide dehydrogenase (E3). The sequence is that of Dihydrolipoyllysine-residue acetyltransferase component of pyruvate dehydrogenase complex (aceF) from Buchnera aphidicola subsp. Baizongia pistaciae (strain Bp).